Reading from the N-terminus, the 504-residue chain is Ribose import ATP-binding protein RbsA 3 (504 aa).

ABC transporter domains are found at residues 6–238 and 251–494; these read ANLK…VGRP and IGAE…MMGG. 38–45 contacts ATP; it reads GENGAGKS.

Belongs to the ABC transporter superfamily. Ribose importer (TC 3.A.1.2.1) family. The complex is composed of an ATP-binding protein (RbsA), two transmembrane proteins (RbsC) and a solute-binding protein (RbsB).

The protein resides in the cell inner membrane. It catalyses the reaction D-ribose(out) + ATP + H2O = D-ribose(in) + ADP + phosphate + H(+). In terms of biological role, part of the ABC transporter complex RbsABC involved in ribose import. Responsible for energy coupling to the transport system. The protein is Ribose import ATP-binding protein RbsA 3 of Rhizobium meliloti (strain 1021) (Ensifer meliloti).